We begin with the raw amino-acid sequence, 72 residues long: Bowman-Birk type proteinase inhibitor 2a (72 aa).

7 disulfides stabilise this stretch: Cys8–Cys61, Cys9–Cys24, Cys12–Cys57, Cys14–Cys22, Cys31–Cys38, Cys35–Cys50, and Cys40–Cys48.

Dimer.

Functionally, inhibits trypsin (IC(50)=0.9 nM) and alpha-chymotrypsin (IC(50)=1.1 nM). In Lathyrus sativus (White vetchling), this protein is Bowman-Birk type proteinase inhibitor 2a.